Consider the following 183-residue polypeptide: Translation initiation factor IF-3 (183 aa).

This sequence belongs to the IF-3 family. As to quaternary structure, monomer.

Its subcellular location is the cytoplasm. IF-3 binds to the 30S ribosomal subunit and shifts the equilibrium between 70S ribosomes and their 50S and 30S subunits in favor of the free subunits, thus enhancing the availability of 30S subunits on which protein synthesis initiation begins. The polypeptide is Translation initiation factor IF-3 (Yersinia enterocolitica serotype O:8 / biotype 1B (strain NCTC 13174 / 8081)).